The chain runs to 455 residues: Glycosyl hydrolase family 109 protein (455 aa).

A signal peptide (tat-type signal) is located at residues 1-33 (MAGIDRRGFLKASMASVAAAALAGCASQQGTSA). NAD(+) is bound by residues 62-63 (ER), Asp84, Gln112, 133-136 (WALH), 153-154 (EV), and Asn182. Residues Tyr211, Arg230, 242 to 245 (YPTH), and Tyr324 each bind substrate. Tyr242 lines the NAD(+) pocket.

It belongs to the Gfo/Idh/MocA family. Glycosyl hydrolase 109 subfamily. The cofactor is NAD(+). In terms of processing, predicted to be exported by the Tat system. The position of the signal peptide cleavage has not been experimentally proven.

Glycosidase. The polypeptide is Glycosyl hydrolase family 109 protein (Shewanella amazonensis (strain ATCC BAA-1098 / SB2B)).